The chain runs to 162 residues: Peptide deformylase-like (162 aa).

Belongs to the polypeptide deformylase family.

The protein is Peptide deformylase-like of Staphylococcus aureus (strain COL).